Consider the following 110-residue polypeptide: UPF0060 membrane protein Veis_0342 (110 aa).

4 consecutive transmembrane segments (helical) span residues 8–28, 33–53, 63–83, and 90–110; these read VLFT…WLVI, PLWL…LLTL, AAYG…VDGV, and VAGA…PASA.

It belongs to the UPF0060 family.

It localises to the cell inner membrane. In Verminephrobacter eiseniae (strain EF01-2), this protein is UPF0060 membrane protein Veis_0342.